Consider the following 261-residue polypeptide: Triosephosphate isomerase (261 aa).

Residue 10-12 (NWK) participates in substrate binding. The Electrophile role is filled by histidine 100. The active-site Proton acceptor is the glutamate 172. Residues glycine 178, serine 218, and 239 to 240 (GG) each bind substrate.

It belongs to the triosephosphate isomerase family. As to quaternary structure, homodimer.

It is found in the cytoplasm. It carries out the reaction D-glyceraldehyde 3-phosphate = dihydroxyacetone phosphate. The protein operates within carbohydrate biosynthesis; gluconeogenesis. It functions in the pathway carbohydrate degradation; glycolysis; D-glyceraldehyde 3-phosphate from glycerone phosphate: step 1/1. Its function is as follows. Involved in the gluconeogenesis. Catalyzes stereospecifically the conversion of dihydroxyacetone phosphate (DHAP) to D-glyceraldehyde-3-phosphate (G3P). The chain is Triosephosphate isomerase from Mycolicibacterium vanbaalenii (strain DSM 7251 / JCM 13017 / BCRC 16820 / KCTC 9966 / NRRL B-24157 / PYR-1) (Mycobacterium vanbaalenii).